Consider the following 211-residue polypeptide: Arginine exporter protein ArgO (211 aa).

The next 6 membrane-spanning stretches (helical) occupy residues 1–21, 37–57, 68–88, 111–131, 147–167, and 179–199; these read MISY…PLGP, LMIA…GIFG, LLAL…FGAL, IIAT…DTFV, WFAL…ALLA, and AQRI…FQLA.

It belongs to the LysE/ArgO transporter (TC 2.A.75) family.

Its subcellular location is the cell inner membrane. It catalyses the reaction L-arginine(in) = L-arginine(out). Involved in the export of arginine. Important to control the intracellular level of arginine and the correct balance between arginine and lysine. The protein is Arginine exporter protein ArgO of Salmonella paratyphi B (strain ATCC BAA-1250 / SPB7).